A 567-amino-acid polypeptide reads, in one-letter code: Urease subunit alpha (567 aa).

The Urease domain occupies 129 to 567 (GGVDTHIHWI…LPMAQRYFLF (439 aa)). Positions 134, 136, and 217 each coordinate Ni(2+). At lysine 217 the chain carries N6-carboxylysine. Histidine 219 serves as a coordination point for substrate. Ni(2+) is bound by residues histidine 246 and histidine 272. Catalysis depends on histidine 320, which acts as the Proton donor. A Ni(2+)-binding site is contributed by aspartate 360.

It belongs to the metallo-dependent hydrolases superfamily. Urease alpha subunit family. As to quaternary structure, heterotrimer of UreA (gamma), UreB (beta) and UreC (alpha) subunits. Three heterotrimers associate to form the active enzyme. Requires Ni cation as cofactor. Post-translationally, carboxylation allows a single lysine to coordinate two nickel ions.

It localises to the cytoplasm. It carries out the reaction urea + 2 H2O + H(+) = hydrogencarbonate + 2 NH4(+). The protein operates within nitrogen metabolism; urea degradation; CO(2) and NH(3) from urea (urease route): step 1/1. This chain is Urease subunit alpha, found in Escherichia coli O157:H7.